The primary structure comprises 206 residues: uncharacterized protein (206 aa).

It is found in the plastid. The protein resides in the cyanelle. This is an uncharacterized protein from Cyanophora paradoxa.